The primary structure comprises 579 residues: Folliculin (579 aa).

The interval 31-82 (QGAGSGDSPDQVEQAEEEEGGIQMSSRVRAHSPAEGASSESSSPGPKKSDMC) is disordered. Serine 62 and serine 73 each carry phosphoserine. Residues 63-76 (PAEGASSESSSPGP) are compositionally biased toward low complexity. Residues 86–242 (RSLAVGHPGY…RNGNAARSLT (157 aa)) form the uDENN FLCN/SMCR8-type domain. A coiled-coil region spans residues 287 to 310 (EKLADLEEESESWDNSEAEEEEKA). A compositionally biased stretch (acidic residues) spans 294–308 (EESESWDNSEAEEEE). The disordered stretch occupies residues 294–323 (EESESWDNSEAEEEEKAPVTPEGAEGRELT). Phosphoserine is present on residues serine 302, serine 406, serine 537, serine 542, and serine 571. A cDENN FLCN/SMCR8-type domain is found at 339–491 (QPPKLTGFKS…ILNKIEAALT (153 aa)). The dDENN FLCN/SMCR8-type domain maps to 493–558 (QNLSVDVVDQ…LLKFWMTGLS (66 aa)).

Belongs to the folliculin family. Interacts (via C-terminus) with FNIP1 or FNIP2 (via C-terminus). Component of the lysosomal folliculin complex (LFC), composed of FLCN, FNIP1 (or FNIP2), RagA/RRAGA or RagB/RRAGB GDP-bound, RagC/RRAGC or RagD/RRAGD GTP-bound, and Ragulator. Interaction with FNIP1 or FNIP2 mediates indirect interaction with the PRKAA1, PRKAB1 and PRKAG1 subunits of 5'-AMP-activated protein kinase (AMPK). Interacts with HSP90AA1 in the presence of FNIP1. Interacts with HSP70, STUB1, CDC37, AHSA1, CCT2, STIP1, PTGES3 and PPP5C. Interacts with GABARAP; interaction takes place in the presence of FNIP1 and/or FNIP2. Interacts with RILP; the interaction is direct and promotes association between RILP and RAB34. Interacts with KIF3A and KIF3B. Interacts with lactate dehydrogenase LDHA, but not LDHB; the interaction is direct, may preferentially bind LDHA dimers rather than tetramers, and regulates LDHA activity, acting as an uncompetitive inhibitor. Post-translationally, phosphorylation by ULK1 modulates the interaction with GABARAP and is required to regulate autophagy. Highly expressed in adult heart, pancreas, and prostate with moderate expression in adult brain, kidney, liver, adipose tissue and lung.

The protein resides in the lysosome membrane. The protein localises to the cytoplasm. It localises to the cytosol. It is found in the cell projection. Its subcellular location is the cilium. The protein resides in the cytoskeleton. The protein localises to the microtubule organizing center. It localises to the centrosome. It is found in the spindle. Its subcellular location is the nucleus. Its activity is regulated as follows. GTPase-activating activity is inhibited in the folliculin complex (LFC), which stabilizes the GDP-bound state of RagA/RRAGA (or RagB/RRAGB), because Arg-164 is located far from the RagC/RRAGC or RagD/RRAGD nucleotide pocket. Disassembly of the LFC complex upon amino acid restimulation liberates the GTPase-activating activity. Its function is as follows. Multi-functional protein, involved in both the cellular response to amino acid availability and in the regulation of glycolysis. GTPase-activating protein that plays a key role in the cellular response to amino acid availability through regulation of the non-canonical mTORC1 signaling cascade controlling the MiT/TFE factors TFEB and TFE3. Activates mTORC1 by acting as a GTPase-activating protein: specifically stimulates GTP hydrolysis by RagC/RRAGC or RagD/RRAGD, promoting the conversion to the GDP-bound state of RagC/RRAGC or RagD/RRAGD, and thereby activating the kinase activity of mTORC1. The GTPase-activating activity is inhibited during starvation and activated in presence of nutrients. Acts as a key component for non-canonical mTORC1-dependent control of the MiT/TFE factors TFEB and TFE3, while it is not involved in mTORC1-dependent phosphorylation of canonical RPS6KB1/S6K1 and EIF4EBP1/4E-BP1. In low-amino acid conditions, the lysosomal folliculin complex (LFC) is formed on the membrane of lysosomes, which inhibits the GTPase-activating activity of FLCN, inactivates mTORC1 and maximizes nuclear translocation of TFEB and TFE3. Upon amino acid restimulation, RagA/RRAGA (or RagB/RRAGB) nucleotide exchange promotes disassembly of the LFC complex and liberates the GTPase-activating activity of FLCN, leading to activation of mTORC1 and subsequent cytoplasmic retention of TFEB and TFE3. Indirectly acts as a positive regulator of Wnt signaling by promoting mTOR-dependent cytoplasmic retention of MiT/TFE factor TFE3. Required for the exit of hematopoietic stem cell from pluripotency by promoting mTOR-dependent cytoplasmic retention of TFE3, thereby increasing Wnt signaling. Involved in the control of embryonic stem cells differentiation; together with LAMTOR1 it is necessary to recruit and activate RagC/RRAGC and RagD/RRAGD at the lysosomes, and to induce exit of embryonic stem cells from pluripotency via non-canonical, mTOR-independent TFE3 inactivation. Acts as an inhibitor of browning of adipose tissue by regulating mTOR-dependent cytoplasmic retention of TFE3. In response to flow stress, regulates STK11/LKB1 accumulation and mTORC1 activation through primary cilia: may act by recruiting STK11/LKB1 to primary cilia for activation of AMPK resided at basal bodies, causing mTORC1 down-regulation. Together with FNIP1 and/or FNIP2, regulates autophagy: following phosphorylation by ULK1, interacts with GABARAP and promotes autophagy. Required for starvation-induced perinuclear clustering of lysosomes by promoting association of RILP with its effector RAB34. Regulates glycolysis by binding to lactate dehydrogenase LDHA, acting as an uncompetitive inhibitor. This chain is Folliculin, found in Mus musculus (Mouse).